We begin with the raw amino-acid sequence, 423 residues long: UPF0229 protein PSEEN0423 (423 aa).

The segment at 85 to 107 is disordered; sequence GEHIARPQGGGGGGGRGKAGNSG. Residues 92 to 107 show a composition bias toward gly residues; the sequence is QGGGGGGGRGKAGNSG.

Belongs to the UPF0229 family.

The protein is UPF0229 protein PSEEN0423 of Pseudomonas entomophila (strain L48).